Here is a 504-residue protein sequence, read N- to C-terminus: UDP-N-acetylglucosamine--peptide N-acetylglucosaminyltransferase GtfA subunit (504 aa).

A UDP-binding site is contributed by 16–19; that stretch reads GVEY. Histidine 243 lines the N-acetyl-D-glucosamine pocket. Residue 385-386 coordinates UDP; it reads HK. 405–408 contributes to the N-acetyl-D-glucosamine binding site; it reads EGFG.

It belongs to the glycosyltransferase group 1 family. Glycosyltransferase 4 subfamily. Interacts with stabilizing protein GtfB (Gtf1), probably via the N-terminus of this protein; probably forms a heterotetramer with 2 subunits each of GtfA and GtfB. Part of the accessory SecA2/SecY2 protein translocation apparatus.

It localises to the cytoplasm. The protein localises to the cell membrane. The enzyme catalyses L-seryl-[protein] + UDP-N-acetyl-alpha-D-glucosamine = 3-O-[N-acetyl-alpha-D-glucosaminyl]-L-seryl-[protein] + UDP + H(+). It participates in protein modification; protein glycosylation. Its function is as follows. Required for polymorphic O-glycosylation of serine-rich repeat protein Fap1. Catalyzes the first step in glycosylation by transferring N-acetylglucosamine from UDP-GlcNAc to serine residues in Fap1. Part of the accessory SecA2/SecY2 system specifically required to export Fap1, a serine-rich fimbrial adhesin encoded upstream in the same operon. The GtfA-GtfB (Gtf1-Gtf2 in this bacteria) complex adds GlcNAc from UDP-GlcNAc to Fap1, attaching the first sugar residue. Cannot use not UDP-Glc as substrate. This subunit has very low glycosyltransferase activity; the GtfB stabilizing protein enhances membrane association, protease resistance and glycosyltransferase activity. The protein is UDP-N-acetylglucosamine--peptide N-acetylglucosaminyltransferase GtfA subunit of Streptococcus parasanguinis.